Here is a 504-residue protein sequence, read N- to C-terminus: MEKFQGYLEFDGARQQSFLYPLFFREYIYVLAYDHGLNRLNKNRSIFLENTDYDKKYSSLIVKRLILRMYEQNRLIIPTKDLNQNSFLGHTSLFYYQMISVLFAVIVEIPFSLRLGSPFQGKQVKKSYNLQSIHSIFPFLEDKLAHFNYVLDVLIPYPIHLEILVQTLRYRVKDASSLHFFRFCLYEYCNWKNFYKKKKSILNPRFFLFLYNSHVCEYESIFFFLRKRSSHLRSTSYEVLFERILFYGKIQYFLKVFVNNFPAILGLLKDPFIHYVRYHGRCVLATKDTPLLMNKWKYYFVNLWQCYFSVWFQSQKVNINQLSKDNLEFLGYLSSLRLNPLVVRSQMLENSFLIDNVRIKLDSKIPISSIIGSLAKDKFCNVLGHPISKATWTDSSDSDILNRFVRICRNISHYYSGSSKKKNLYRIKYILRLCCVKTLARKHKSTVRAFLKRLGSGLLEEFLTGEDQVLSLIFPRSYYAAKRLYRVRIWYLDILYLNDLVNHE.

Belongs to the intron maturase 2 family. MatK subfamily.

The protein resides in the plastid. It localises to the chloroplast. In terms of biological role, usually encoded in the trnK tRNA gene intron. Probably assists in splicing its own and other chloroplast group II introns. This is Maturase K from Olimarabidopsis pumila (Dwarf rocket).